The sequence spans 400 residues: Diphosphomevalonate decarboxylase (400 aa).

(R)-5-diphosphomevalonate-binding positions include 19-22 (YWGK), R75, 154-159 (SGSACR), and T210. A disordered region spans residues 381–400 (DGPRTLGPEEALLSPDGLPK).

It belongs to the diphosphomevalonate decarboxylase family.

The catalysed reaction is (R)-5-diphosphomevalonate + ATP = isopentenyl diphosphate + ADP + phosphate + CO2. It participates in isoprenoid biosynthesis; isopentenyl diphosphate biosynthesis via mevalonate pathway; isopentenyl diphosphate from (R)-mevalonate: step 3/3. Its function is as follows. Diphosphomevalonate decarboxylase; part of the second module of ergosterol biosynthesis pathway that includes the middle steps of the pathway. The second module involves the formation of farnesyl diphosphate, which is also an important intermediate in the biosynthesis of ubiquinone, dolichol, heme and prenylated proteins. This module also plays a key role in the biosynthesis of triterpenes such as ganoderic acids (GA), a group of highly oxygenated lanostane-type triterpenoids which are well recognized as a main group of unique bioactive compounds in the medicinal mushroom Ganoderma lucidum. Activity by the mevalonate kinase first converts mevalonate into 5-phosphomevalonate. 5-phosphomevalonate is then further converted to 5-diphosphomevalonate by the phosphomevalonate kinase. The diphosphomevalonate decarboxylase MVD then produces isopentenyl diphosphate. The isopentenyl-diphosphate delta-isomerase then catalyzes the 1,3-allylic rearrangement of the homoallylic substrate isopentenyl (IPP) to its highly electrophilic allylic isomer, dimethylallyl diphosphate (DMAPP). Finally the farnesyl diphosphate synthase FPS catalyzes the sequential condensation of isopentenyl pyrophosphate with dimethylallyl pyrophosphate, and then with the resultant geranylpyrophosphate to the ultimate product farnesyl pyrophosphate. This is Diphosphomevalonate decarboxylase from Ganoderma lucidum (Ling zhi medicinal fungus).